A 147-amino-acid polypeptide reads, in one-letter code: Methylglyoxal synthase (147 aa).

Residues 1–147 (MKGQRNIGMV…TPYVKRLGAK (147 aa)) enclose the MGS-like domain. Residues His12, Lys16, 38–41 (TGTT), and 59–60 (SG) each bind substrate. Asp65 serves as the catalytic Proton donor/acceptor. His92 is a binding site for substrate.

This sequence belongs to the methylglyoxal synthase family.

The enzyme catalyses dihydroxyacetone phosphate = methylglyoxal + phosphate. Functionally, catalyzes the formation of methylglyoxal from dihydroxyacetone phosphate. This Oleidesulfovibrio alaskensis (strain ATCC BAA-1058 / DSM 17464 / G20) (Desulfovibrio alaskensis) protein is Methylglyoxal synthase.